The primary structure comprises 80 residues: RNA-binding protein Hfq (80 aa).

A Sm domain is found at 9–68 (EPFLNALRKERIPVSIYLVNGIKLQGQIDSFDQFVVLLKNTVSQMVYKHAISTIVPSRPV).

Belongs to the Hfq family. As to quaternary structure, homohexamer.

In terms of biological role, RNA chaperone that binds small regulatory RNA (sRNAs) and mRNAs to facilitate mRNA translational regulation in response to envelope stress, environmental stress and changes in metabolite concentrations. Also binds with high specificity to tRNAs. The sequence is that of RNA-binding protein Hfq from Thioalkalivibrio sulfidiphilus (strain HL-EbGR7).